A 409-amino-acid polypeptide reads, in one-letter code: Arginine deiminase (409 aa).

Cys-399 serves as the catalytic Amidino-cysteine intermediate.

This sequence belongs to the arginine deiminase family.

The protein localises to the cytoplasm. It carries out the reaction L-arginine + H2O = L-citrulline + NH4(+). It functions in the pathway amino-acid degradation; L-arginine degradation via ADI pathway; carbamoyl phosphate from L-arginine: step 1/2. This Borrelia recurrentis (strain A1) protein is Arginine deiminase.